The following is a 505-amino-acid chain: MNNRGRYPPGIGAGRGAFNPNPNYQSRSGYQQHPPPQYVQRGNYAQNHQQQFQQAPSQPHQYQQQQQQQQQWLRRGQIPGGNSNGDAVVEVEKTVQSEVIDPNSEDWKARLKLPAPDTRYRTEDVTATKGNEFEDYFLKRELLMGIYEKGFERPSPIQEESIPIALTGRDILARAKNGTGKTAAFCIPVLEKIDQDNNVIQAVIIVPTRELALQTSQVCKELGKHLKIQVMVTTGGTSLKDDIMRLYQPVHLLVGTPGRILDLTKKGVCVLKDCSVLVMDEADKLLSQEFQPSVEHLISFLPESRQILMFSATFPVTVKDFKDRFLTNPYVINLMDELTLKGITQFYAFVEERQKIHCLNTLFSKLQINQSIIFCNSVNRVELLAKKITELGYSCFYIHAKMLQDHRNRVFHDFRNGACRNLVCTDLFTRGIDIQAVNVVINFDFPKNAETYLHRVGRSGRFGHLGLAVNLITYEDRFNLYRIEQELGTEIKQIPPHIDQAIYCQ.

The segment at 1-85 is disordered; it reads MNNRGRYPPG…GQIPGGNSNG (85 aa). Residues 20 to 31 are compositionally biased toward polar residues; it reads PNPNYQSRSGYQ. Over residues 43-71 the composition is skewed to low complexity; it reads NYAQNHQQQFQQAPSQPHQYQQQQQQQQQ. A Q motif motif is present at residues 131-159; sequence NEFEDYFLKRELLMGIYEKGFERPSPIQE. Positions 162–332 constitute a Helicase ATP-binding domain; sequence IPIALTGRDI…DRFLTNPYVI (171 aa). Position 175–182 (175–182) interacts with ATP; that stretch reads AKNGTGKT. Position 237 is a phosphothreonine (threonine 237). The short motif at 280-283 is the DEAD box element; that stretch reads DEAD. The Helicase C-terminal domain occupies 342 to 502; it reads GITQFYAFVE…QIPPHIDQAI (161 aa).

Belongs to the DEAD box helicase family. DDX6/DHH1 subfamily.

The protein localises to the cytoplasm. It localises to the P-body. It catalyses the reaction ATP + H2O = ADP + phosphate + H(+). Functionally, ATP-dependent RNA helicase involved in mRNA turnover, and more specifically in mRNA decapping. The protein is DEAD-box ATP-dependent RNA helicase 8 (RH8) of Arabidopsis thaliana (Mouse-ear cress).